The sequence spans 261 residues: Mlc titration factor A (261 aa).

Zn(2+) is bound by residues His111, His148, His152, and Glu211.

Belongs to the MtfA family. In terms of assembly, interacts with Mlc. It depends on Zn(2+) as a cofactor.

Its subcellular location is the cytoplasm. In terms of biological role, involved in the modulation of the activity of the glucose-phosphotransferase system (glucose-PTS). Interacts with the transcriptional repressor Mlc, preventing its interaction with DNA and leading to the modulation of expression of genes regulated by Mlc, including ptsG, which encodes the PTS system glucose-specific EIICB component. Functionally, shows zinc-dependent metallopeptidase activity. In Edwardsiella ictaluri (strain 93-146), this protein is Mlc titration factor A.